The following is a 294-amino-acid chain: MKIGIYGQFYHANAAQYIGQLLELLDQRNIEVLIEEDFLKLIHSNNKIEKDYKHFSAFEELDNSFDLFFCIGGDGTILKSINYIRNLDIPIVGINTGRLGFLATIQKEQIESTLEELLEKKFSLSPRSVLTMQTNPRSYDPVFSHIALNEIAVSRKNTTSMITVDTWLDDQYLTSYWADGLIISTPTGSTGYSLSCGGPVITPDADSLVITPIAPHNLNARPLVIKDHTTIKLKVSGRGKEHLVSMDSRIATLQNDTEIIIKKAPYTINFVELQGDSFLNTLRKKLLWGEDKRN.

Aspartate 74 acts as the Proton acceptor in catalysis. NAD(+) is bound by residues 74–75 (DG), lysine 79, 149–150 (NE), aspartate 179, 190–195 (TGYSLS), and alanine 214.

It belongs to the NAD kinase family. It depends on a divalent metal cation as a cofactor.

The protein localises to the cytoplasm. The catalysed reaction is NAD(+) + ATP = ADP + NADP(+) + H(+). In terms of biological role, involved in the regulation of the intracellular balance of NAD and NADP, and is a key enzyme in the biosynthesis of NADP. Catalyzes specifically the phosphorylation on 2'-hydroxyl of the adenosine moiety of NAD to yield NADP. The chain is NAD kinase from Christiangramia forsetii (strain DSM 17595 / CGMCC 1.15422 / KT0803) (Gramella forsetii).